Here is a 350-residue protein sequence, read N- to C-terminus: Probable sugar phosphate/phosphate translocator At4g32390 (350 aa).

The next 10 membrane-spanning stretches (helical) occupy residues isoleucine 15–tyrosine 35, phenylalanine 49–isoleucine 69, valine 89–tyrosine 109, valine 112–leucine 132, methionine 146–tryptophan 166, valine 168–leucine 188, valine 205–leucine 225, phenylalanine 235–leucine 255, threonine 263–isoleucine 283, and threonine 286–asparagine 306. One can recognise an EamA domain in the interval tyrosine 38–isoleucine 155. The tract at residues glutamine 324 to aspartate 350 is disordered.

The protein belongs to the TPT transporter family. TPT (TC 2.A.7.9) subfamily.

The protein resides in the membrane. The sequence is that of Probable sugar phosphate/phosphate translocator At4g32390 from Arabidopsis thaliana (Mouse-ear cress).